The sequence spans 361 residues: Tetraacyldisaccharide 4'-kinase (361 aa).

49-56 (TTGGTGKT) is a binding site for ATP.

The protein belongs to the LpxK family.

It carries out the reaction a lipid A disaccharide + ATP = a lipid IVA + ADP + H(+). Its pathway is glycolipid biosynthesis; lipid IV(A) biosynthesis; lipid IV(A) from (3R)-3-hydroxytetradecanoyl-[acyl-carrier-protein] and UDP-N-acetyl-alpha-D-glucosamine: step 6/6. In terms of biological role, transfers the gamma-phosphate of ATP to the 4'-position of a tetraacyldisaccharide 1-phosphate intermediate (termed DS-1-P) to form tetraacyldisaccharide 1,4'-bis-phosphate (lipid IVA). This is Tetraacyldisaccharide 4'-kinase from Chlorobaculum parvum (strain DSM 263 / NCIMB 8327) (Chlorobium vibrioforme subsp. thiosulfatophilum).